Consider the following 115-residue polypeptide: Con-Ins G1c (115 aa).

Positions 1–24 are cleaved as a signal peptide; sequence MTTSFYFLLMALGLLLYVCQSSFG. The propeptide occupies 25 to 29; it reads NQHTR. Pro-34 is subject to 4-hydroxyproline; partial. 3 disulfides stabilise this stretch: Cys-38–Cys-101, Cys-50–Cys-114, and Cys-100–Cys-105. Glu-41 carries the 4-carboxyglutamate modification. Positions 53–94 are cleaved as a propeptide — c peptide; it reads KRNDAGKKRGRASPLWQRRGSLSQLKARAKRNGAFHLPRDGR. Residue Glu-98 is modified to 4-carboxyglutamate. Pro-104 is subject to 4-hydroxyproline; partial. A 4-carboxyglutamate; partial modification is found at Glu-109.

The protein belongs to the insulin family. As to quaternary structure, heterodimer of A and B chains; disulfide-linked. Post-translationally, is different from Con-Ins G1a (AC A0A0B5AC95) due to absence of amidation at Cys-114. Expressed by the venom gland.

It is found in the secreted. Its function is as follows. This venom insulin, from a fish-hunting cone snail, facilitates prey capture by rapidly inducing hypoglycemic shock. It is one of the smallest known insulin found in nature and lacks the C-terminal segment of the B chain that, in human insulin, mediates engagement of the insulin receptor (INSR) and assembly of the hormone's hexameric storage form. Despite lacking this segment, it both binds and activates human insulin receptor (long isoform (HIR-B)) with only a 10-fold lower potency. In vivo, intraperitoneal injection of this peptide into zebrafish lowers blood glucose with the same potency than human insulin. In addition, when applied to water, this peptide reduces overall locomotor activity of zebrafish larvae, observed as a significant decrease in the percentage of time spent swimming and movement frequency. The sequence is that of Con-Ins G1c from Conus geographus (Geography cone).